We begin with the raw amino-acid sequence, 282 residues long: Protein DOG1-like 3 (282 aa).

Residues E11–Q254 enclose the DOG1 domain.

This Arabidopsis thaliana (Mouse-ear cress) protein is Protein DOG1-like 3.